A 463-amino-acid chain; its full sequence is Chromosomal replication initiator protein DnaA (463 aa).

The tract at residues 1–83 (MSLSLWQQCL…LRFEVGSKPI (83 aa)) is domain I, interacts with DnaA modulators. A domain II region spans residues 83 to 126 (IVPVAVSSAASSGASVPPAAVRASSLARPSWERVTAQPELSYRS). Positions 127-343 (NVNPKHTFDN…GALNRVIANA (217 aa)) are domain III, AAA+ region. Residues G171, G173, K174, and T175 each coordinate ATP. Residues 344–463 (NFTGRAITID…FSNLIRTLSS (120 aa)) form a domain IV, binds dsDNA region.

Belongs to the DnaA family. In terms of assembly, oligomerizes as a right-handed, spiral filament on DNA at oriC.

Its subcellular location is the cytoplasm. Its function is as follows. Plays an essential role in the initiation and regulation of chromosomal replication. ATP-DnaA binds to the origin of replication (oriC) to initiate formation of the DNA replication initiation complex once per cell cycle. Binds the DnaA box (a 9 base pair repeat at the origin) and separates the double-stranded (ds)DNA. Forms a right-handed helical filament on oriC DNA; dsDNA binds to the exterior of the filament while single-stranded (ss)DNA is stabiized in the filament's interior. The ATP-DnaA-oriC complex binds and stabilizes one strand of the AT-rich DNA unwinding element (DUE), permitting loading of DNA polymerase. After initiation quickly degrades to an ADP-DnaA complex that is not apt for DNA replication. Binds acidic phospholipids. The polypeptide is Chromosomal replication initiator protein DnaA (Edwardsiella ictaluri (strain 93-146)).